A 303-amino-acid chain; its full sequence is Cytosolic-abundant heat soluble protein 3 (303 aa).

The span at Met1–Gln19 shows a compositional bias: low complexity. A disordered region spans residues Met1–Glu67. Residues Ala170–Asn257 are a coiled coil. CAHS motif regions lie at residues Tyr184–Gln202 and Gln221–Glu239. Residues Lys270 to Ser280 show a composition bias toward polar residues. The disordered stretch occupies residues Lys270–Arg303. Over residues Thr282–Thr291 the composition is skewed to low complexity. Residues Lys294 to Arg303 are compositionally biased toward basic and acidic residues.

It belongs to the Cytosolic-abundant heat soluble protein (CAHS) family.

It is found in the cytoplasm. Functionally, CAHS proteins are cytosolic heat soluble proteins that seem to contribute to the anhydrobiosis in tardigrades, but their specific mechanisms are yet to be identified. It is possible that protection during anhydrobiosis might occur via the stabilization of vitrifying small molecules such as sugars, but not via the direct glass transition of CAHS proteins themselves. The sequence is that of Cytosolic-abundant heat soluble protein 3 from Ramazzottius varieornatus (Water bear).